A 479-amino-acid polypeptide reads, in one-letter code: Chromosomal replication initiator protein DnaA (479 aa).

The segment at 1–94 (MKGGTMVENA…QTLWRTERED (94 aa)) is domain I, interacts with DnaA modulators. A domain II region spans residues 94–142 (DIKGVELQVKRGLPEVSMGDAEDGEDGSGEGHELATQAAAPESRSDLAV). Residues 106-137 (LPEVSMGDAEDGEDGSGEGHELATQAAAPESR) are disordered. The segment at 143 to 359 (PLDPRFTFDT…GALNRLIAHA (217 aa)) is domain III, AAA+ region. ATP contacts are provided by G188, G190, K191, and T192. The interval 360–479 (DLVGRPVTLD…VELLRRMLEG (120 aa)) is domain IV, binds dsDNA.

Belongs to the DnaA family. As to quaternary structure, oligomerizes as a right-handed, spiral filament on DNA at oriC.

It is found in the cytoplasm. Plays an essential role in the initiation and regulation of chromosomal replication. ATP-DnaA binds to the origin of replication (oriC) to initiate formation of the DNA replication initiation complex once per cell cycle. Binds the DnaA box (a 9 base pair repeat at the origin) and separates the double-stranded (ds)DNA. Forms a right-handed helical filament on oriC DNA; dsDNA binds to the exterior of the filament while single-stranded (ss)DNA is stabiized in the filament's interior. The ATP-DnaA-oriC complex binds and stabilizes one strand of the AT-rich DNA unwinding element (DUE), permitting loading of DNA polymerase. After initiation quickly degrades to an ADP-DnaA complex that is not apt for DNA replication. Binds acidic phospholipids. The polypeptide is Chromosomal replication initiator protein DnaA (Gluconobacter oxydans (strain 621H) (Gluconobacter suboxydans)).